A 484-amino-acid polypeptide reads, in one-letter code: 3-isopropylmalate dehydratase large subunit (484 aa).

The [4Fe-4S] cluster site is built by cysteine 352, cysteine 412, and cysteine 415. Residues 462–484 (GTLSSPSDLDPAPESAAVSSSAA) are disordered.

Belongs to the aconitase/IPM isomerase family. LeuC type 1 subfamily. In terms of assembly, heterodimer of LeuC and LeuD. Requires [4Fe-4S] cluster as cofactor.

The catalysed reaction is (2R,3S)-3-isopropylmalate = (2S)-2-isopropylmalate. It functions in the pathway amino-acid biosynthesis; L-leucine biosynthesis; L-leucine from 3-methyl-2-oxobutanoate: step 2/4. Its function is as follows. Catalyzes the isomerization between 2-isopropylmalate and 3-isopropylmalate, via the formation of 2-isopropylmaleate. The polypeptide is 3-isopropylmalate dehydratase large subunit (Arthrobacter sp. (strain FB24)).